A 431-amino-acid chain; its full sequence is Keratin, type I cytoskeletal 40 (431 aa).

The tract at residues 1–89 (MASEGSPDCC…CEEGTFNSNE (89 aa)) is head. The region spanning 89 to 400 (EKETMQFLND…GLLEKEDSRL (312 aa)) is the IF rod domain. The tract at residues 90–124 (KETMQFLNDRLASYLERVRSLEENNAELECRIREQ) is coil 1A. The linker 1 stretch occupies residues 125-135 (CEPDATPVCPD). The coil 1B stretch occupies residues 136–236 (YQRYFDTIEE…HEEEVNLLRE (101 aa)). A linker 12 region spans residues 237–252 (QLGDRLNVELDTAPTV). The interval 253-396 (DLNKVLDEMR…NTYRGLLEKE (144 aa)) is coil 2. Residues 397 to 431 (DSRLPCNPGSTASISNSACEPCSAYVICTVENCCA) are tail.

This sequence belongs to the intermediate filament family. In terms of assembly, heterotetramer of two type I and two type II keratins.

Its function is as follows. May play a role in late hair differentiation. The polypeptide is Keratin, type I cytoskeletal 40 (Krt40) (Rattus norvegicus (Rat)).